We begin with the raw amino-acid sequence, 158 residues long: Ribosome maturation factor RimP (158 aa).

The protein belongs to the RimP family.

The protein resides in the cytoplasm. Required for maturation of 30S ribosomal subunits. The polypeptide is Ribosome maturation factor RimP (Lactobacillus helveticus (strain DPC 4571)).